A 347-amino-acid polypeptide reads, in one-letter code: GMP reductase (347 aa).

108–131 (AEFEKVKKIMALSEEFVFICIDIA) is a binding site for NADP(+). K(+) is bound by residues Gly-181 and Gly-183. Catalysis depends on Cys-186, which acts as the Thioimidate intermediate. 216–239 (IIGDGGCSCAGDVSKAFGGGADFV) contacts NADP(+).

This sequence belongs to the IMPDH/GMPR family. GuaC type 1 subfamily. As to quaternary structure, homotetramer.

It catalyses the reaction IMP + NH4(+) + NADP(+) = GMP + NADPH + 2 H(+). Functionally, catalyzes the irreversible NADPH-dependent deamination of GMP to IMP. It functions in the conversion of nucleobase, nucleoside and nucleotide derivatives of G to A nucleotides, and in maintaining the intracellular balance of A and G nucleotides. The chain is GMP reductase from Vibrio atlanticus (strain LGP32) (Vibrio splendidus (strain Mel32)).